A 154-amino-acid chain; its full sequence is Anaerobic ribonucleoside-triphosphate reductase-activating protein (154 aa).

Residues Cys-26, Cys-30, and Cys-33 each coordinate [4Fe-4S] cluster. S-adenosyl-L-methionine-binding positions include Gly-32–Tyr-34 and Gly-74.

This sequence belongs to the organic radical-activating enzymes family. In terms of assembly, forms a tetramer composed of two NrdD and two NrdG subunits. [4Fe-4S] cluster serves as cofactor.

It localises to the cytoplasm. The enzyme catalyses glycyl-[protein] + reduced [flavodoxin] + S-adenosyl-L-methionine = glycin-2-yl radical-[protein] + semiquinone [flavodoxin] + 5'-deoxyadenosine + L-methionine + H(+). Activation of anaerobic ribonucleoside-triphosphate reductase under anaerobic conditions by generation of an organic free radical, using S-adenosylmethionine and reduced flavodoxin as cosubstrates to produce 5'-deoxy-adenosine. This chain is Anaerobic ribonucleoside-triphosphate reductase-activating protein (nrdG), found in Salmonella typhimurium (strain LT2 / SGSC1412 / ATCC 700720).